A 356-amino-acid chain; its full sequence is 3-isopropylmalate dehydrogenase (356 aa).

Substrate contacts are provided by R95, R105, R133, and D223. Positions 223, 247, and 251 each coordinate Mg(2+). NAD(+) is bound at residue 281 to 293 (GSAPDIAGQNKAN).

This sequence belongs to the isocitrate and isopropylmalate dehydrogenases family. LeuB type 1 subfamily. Homodimer. Mg(2+) is required as a cofactor. It depends on Mn(2+) as a cofactor.

It localises to the cytoplasm. The enzyme catalyses (2R,3S)-3-isopropylmalate + NAD(+) = 4-methyl-2-oxopentanoate + CO2 + NADH. Its pathway is amino-acid biosynthesis; L-leucine biosynthesis; L-leucine from 3-methyl-2-oxobutanoate: step 3/4. Catalyzes the oxidation of 3-carboxy-2-hydroxy-4-methylpentanoate (3-isopropylmalate) to 3-carboxy-4-methyl-2-oxopentanoate. The product decarboxylates to 4-methyl-2 oxopentanoate. The polypeptide is 3-isopropylmalate dehydrogenase (Neisseria gonorrhoeae (strain ATCC 700825 / FA 1090)).